The chain runs to 366 residues: tRNA/tmRNA (uracil-C(5))-methyltransferase (366 aa).

S-adenosyl-L-methionine is bound by residues glutamine 187, tyrosine 215, asparagine 220, glutamate 236, and aspartate 297. Cysteine 322 (nucleophile) is an active-site residue. The active-site Proton acceptor is glutamate 356.

Belongs to the class I-like SAM-binding methyltransferase superfamily. RNA M5U methyltransferase family. TrmA subfamily.

It catalyses the reaction uridine(54) in tRNA + S-adenosyl-L-methionine = 5-methyluridine(54) in tRNA + S-adenosyl-L-homocysteine + H(+). It carries out the reaction uridine(341) in tmRNA + S-adenosyl-L-methionine = 5-methyluridine(341) in tmRNA + S-adenosyl-L-homocysteine + H(+). In terms of biological role, dual-specificity methyltransferase that catalyzes the formation of 5-methyluridine at position 54 (m5U54) in all tRNAs, and that of position 341 (m5U341) in tmRNA (transfer-mRNA). The polypeptide is tRNA/tmRNA (uracil-C(5))-methyltransferase (Marinomonas sp. (strain MWYL1)).